Consider the following 92-residue polypeptide: UPF0235 protein PF1765 (92 aa).

This sequence belongs to the UPF0235 family.

This chain is UPF0235 protein PF1765, found in Pyrococcus furiosus (strain ATCC 43587 / DSM 3638 / JCM 8422 / Vc1).